A 399-amino-acid polypeptide reads, in one-letter code: Elongation factor Tu (399 aa).

The tr-type G domain occupies 10 to 209; that stretch reads KPHVNIGTIG…AVDSYIPTPV (200 aa). Residues 19-26 form a G1 region; sequence GHVDHGKT. 19-26 serves as a coordination point for GTP; sequence GHVDHGKT. Threonine 26 is a binding site for Mg(2+). Residues 60-64 form a G2 region; the sequence is GITIA. The tract at residues 81 to 84 is G3; sequence DCPG. Residues 81–85 and 136–139 each bind GTP; these read DCPGH and NKAD. The segment at 136–139 is G4; the sequence is NKAD. Residues 174–176 are G5; the sequence is SAL.

The protein belongs to the TRAFAC class translation factor GTPase superfamily. Classic translation factor GTPase family. EF-Tu/EF-1A subfamily. Monomer.

It localises to the cytoplasm. The enzyme catalyses GTP + H2O = GDP + phosphate + H(+). GTP hydrolase that promotes the GTP-dependent binding of aminoacyl-tRNA to the A-site of ribosomes during protein biosynthesis. The polypeptide is Elongation factor Tu (Campylobacter fetus subsp. fetus (strain 82-40)).